A 166-amino-acid polypeptide reads, in one-letter code: Regulator of ribonuclease activity A (166 aa).

The protein belongs to the RraA family. As to quaternary structure, homotrimer. Binds to both RNA-binding sites in the C-terminal region of Rne and to RhlB.

It is found in the cytoplasm. Globally modulates RNA abundance by binding to RNase E (Rne) and regulating its endonucleolytic activity. Can modulate Rne action in a substrate-dependent manner by altering the composition of the degradosome. Modulates RNA-binding and helicase activities of the degradosome. The polypeptide is Regulator of ribonuclease activity A (Histophilus somni (strain 129Pt) (Haemophilus somnus)).